The following is an 811-amino-acid chain: Probable inorganic carbon transporter subunit DabA (811 aa).

Zn(2+) contacts are provided by cysteine 336, aspartate 338, histidine 498, and cysteine 513.

It belongs to the inorganic carbon transporter (TC 9.A.2) DabA family. As to quaternary structure, forms a complex with DabB. Zn(2+) serves as cofactor.

The protein localises to the cell inner membrane. Part of an energy-coupled inorganic carbon pump. The sequence is that of Probable inorganic carbon transporter subunit DabA from Rhodospirillum centenum (strain ATCC 51521 / SW).